We begin with the raw amino-acid sequence, 724 residues long: Catalase-peroxidase (724 aa).

Residues 98–226 constitute a cross-link (tryptophyl-tyrosyl-methioninium (Trp-Tyr) (with M-252)); that stretch reads WHSAGTYRIA…LATVMMGLIY (129 aa). Catalysis depends on His99, which acts as the Proton acceptor. The tryptophyl-tyrosyl-methioninium (Tyr-Met) (with W-98) cross-link spans 226–252; it reads YVNPEGVDGNPDPLKTAQDMRVTFARM. Residue His267 coordinates heme b.

It belongs to the peroxidase family. Peroxidase/catalase subfamily. Homodimer or homotetramer. Heme b serves as cofactor. Formation of the three residue Trp-Tyr-Met cross-link is important for the catalase, but not the peroxidase activity of the enzyme.

The enzyme catalyses H2O2 + AH2 = A + 2 H2O. The catalysed reaction is 2 H2O2 = O2 + 2 H2O. Its function is as follows. Bifunctional enzyme with both catalase and broad-spectrum peroxidase activity. The chain is Catalase-peroxidase from Vibrio cholerae serotype O1 (strain ATCC 39541 / Classical Ogawa 395 / O395).